A 378-amino-acid polypeptide reads, in one-letter code: N-acetyldiaminopimelate deacetylase (378 aa).

Asp65 is an active-site residue. The active-site Proton acceptor is the Glu124.

The protein belongs to the peptidase M20A family. N-acetyldiaminopimelate deacetylase subfamily.

The catalysed reaction is N-acetyl-(2S,6S)-2,6-diaminopimelate + H2O = (2S,6S)-2,6-diaminopimelate + acetate. It participates in amino-acid biosynthesis; L-lysine biosynthesis via DAP pathway; LL-2,6-diaminopimelate from (S)-tetrahydrodipicolinate (acetylase route): step 3/3. Its function is as follows. Catalyzes the conversion of N-acetyl-diaminopimelate to diaminopimelate and acetate. In Anoxybacillus flavithermus (strain DSM 21510 / WK1), this protein is N-acetyldiaminopimelate deacetylase.